The chain runs to 520 residues: MSLKEEQVSIKQDPEQEERQHDQFNDVQIKQESQDHDGVDSQYTNGTQNDDSERFEAAESDVKVEPGLGMGITSSQSEKGQVLPDQPEIKFIRRQINGYVGFANLPKQWHRRSIKNGFSFNLLCVGPDGIGKTTLMKTLFNNDDIEANLVKDYEEELANDQEEEEGQGEGHENQSQEQRHKVKIKSYESVIEENGVKLNLNVIDTEGFGDFLNNDQKSWDPIIKEIDSRFDQYLDAENKINRHSINDKRIHACLYFIEPTGHYLKPLDLKFMQSVYEKCNLIPVIAKSDILTDEEILSFKKTIMNQLIQSNIELFKPPIYSNDDAENSHLSERLFSSLPYAVIGSNDIVENYSGNQVRGRSYPWGVIEVDNDNHSDFNLLKNLLIKQFMEELKERTSKILYENYRSSKLAKLGIKQDNSVFKEFDPISKQQEEKTLHEAKLAKLEIEMKTVFQQKVSEKEKKLQKSETELFARHKEMKEKLTKQLKALEDKKKQLELSINSASPNVNHSPVPTKKKGFLR.

Basic and acidic residues predominate over residues 1–24 (MSLKEEQVSIKQDPEQEERQHDQF). The interval 1–83 (MSLKEEQVSI…SSQSEKGQVL (83 aa)) is disordered. Ser-2 carries the post-translational modification N-acetylserine. Ser-2 carries the phosphoserine modification. Residue Lys-4 forms a Glycyl lysine isopeptide (Lys-Gly) (interchain with G-Cter in SUMO) linkage. Ser-9 is subject to Phosphoserine. Glycyl lysine isopeptide (Lys-Gly) (interchain with G-Cter in SUMO) cross-links involve residues Lys-11 and Lys-30. Residue Thr-47 is modified to Phosphothreonine. Over residues 51–64 (DSERFEAAESDVKV) the composition is skewed to basic and acidic residues. The residue at position 60 (Ser-60) is a Phosphoserine. Lys-63 participates in a covalent cross-link: Glycyl lysine isopeptide (Lys-Gly) (interchain with G-Cter in SUMO). The residue at position 77 (Ser-77) is a Phosphoserine. The region spanning 116 to 411 (NGFSFNLLCV…ENYRSSKLAK (296 aa)) is the Septin-type G domain. A G1 motif region spans residues 126 to 133 (GPDGIGKT). 126–133 (GPDGIGKT) serves as a coordination point for GTP. Acidic residues predominate over residues 156–167 (ELANDQEEEEGQ). Residues 156 to 181 (ELANDQEEEEGQGEGHENQSQEQRHK) form a disordered region. The segment covering 168 to 179 (GEGHENQSQEQR) has biased composition (basic and acidic residues). Ser-175 is subject to Phosphoserine. Positions 204-207 (DTEG) are G3 motif. Residues Gly-207, 287-295 (KSDILTDEE), Gly-344, and Arg-360 each bind GTP. Residues 286–289 (AKSD) form a G4 motif region. A Glycyl lysine isopeptide (Lys-Gly) (interchain with G-Cter in SUMO) cross-link involves residue Lys-287. A coiled-coil region spans residues 427–508 (ISKQQEEKTL…INSASPNVNH (82 aa)). A Phosphothreonine modification is found at Thr-468. Residues 496–520 (ELSINSASPNVNHSPVPTKKKGFLR) are disordered. A compositionally biased stretch (polar residues) spans 497–510 (LSINSASPNVNHSP). A Phosphoserine modification is found at Ser-509.

It belongs to the TRAFAC class TrmE-Era-EngA-EngB-Septin-like GTPase superfamily. Septin GTPase family. Component of the septin complex which consists of CDC3, CDC10, CDC11, CDC12 and probably SHS1 and rearranges to a cortical collar of highly ordered filaments at the mother-bud-neck. A complex formed by CDC3, CDC10, CDC11 and CDC12 is capable of forming long filaments in vitro and the components seem to be present in a 2:2:2:2 arrangement in vivo. The filaments are proposed to be formed by the end-to-end polymerization of CDC3-CDC12-CDC11 complexes with CDC10 serving as a bridge to bundle the polymers into paired filaments. Component of the GIN4 complex composed of at least BNI5, CDC3, CDC10, CDC11, CDC12, GIN4, NAP1 and SHS1. Self-associates. Interacts with SIZ1 and SYP1. Post-translationally, phosphorylated by CDC28. Phosphorylation at the end of G1 may facilitate initiation of a new cell cycle by promoting disassembly of the obsolete septin ring from the previous cell cycle. In terms of processing, sumoylated during mitosis on the mother cell side of the bud neck by UBC9/SIZ1. Sumoylation probably plays a central role in regulating septin ring disassembly during the cell cycle.

The protein localises to the membrane. Its subcellular location is the bud neck. Its function is as follows. Septins are GTPases involved in cytokinesis that assemble early in the cell cycle as a patch at the incipient bud site and form a ring approximate 15 minutes before bud emergence, which transforms into an hour-glass shaped collar of cortical filaments that spans both sides of the mother-bud neck. This collar persists until just before cytokinesis, when it splits into two rings that occupy opposite sides of the neck. The septins at the bud neck serve as a structural scaffold that recruits different components involved in diverse processes at specific stages during the cell cycle. Many proteins bind asymmetrically to the septin collar. The septin assembly is regulated by protein kinases GIN4 and/or CLA4. May act by recruiting MYO1 and HOF1, a protein involved in septation, to the site of cleavage. Septins are also involved in cell morphogenesis, bud site selection, chitin deposition, cell cycle regulation, cell compartmentalization and spore wall formation. In Saccharomyces cerevisiae (strain ATCC 204508 / S288c) (Baker's yeast), this protein is Cell division control protein 3 (CDC3).